The sequence spans 142 residues: Neurofilament heavy polypeptide (142 aa).

Residues methionine 1–methionine 142 enclose the IF rod domain. Residues isoleucine 26–glutamate 74 are a coiled coil.

The protein belongs to the intermediate filament family. Forms heterodimers with NEFL; which can further hetero-oligomerize (in vitro). Forms heterodimers with INA (in vitro). Post-translationally, there are a number of repeats of the tripeptide K-S-P, NFH is phosphorylated on a number of the serines in this motif. It is thought that phosphorylation of NFH results in the formation of interfilament cross bridges that are important in the maintenance of axonal caliber. In terms of processing, phosphorylation seems to play a major role in the functioning of the larger neurofilament polypeptides (NF-M and NF-H), the levels of phosphorylation being altered developmentally and coincidentally with a change in the neurofilament function. Phosphorylated in the head and rod regions by the PKC kinase PKN1, leading to the inhibition of polymerization.

Its subcellular location is the cytoplasm. The protein localises to the cytoskeleton. The protein resides in the cell projection. It localises to the axon. Functionally, neurofilaments usually contain three intermediate filament proteins: NEFL, NEFM, and NEFH which are involved in the maintenance of neuronal caliber. NEFH has an important function in mature axons that is not subserved by the two smaller NF proteins. May additionally cooperate with the neuronal intermediate filament proteins PRPH and INA to form neuronal filamentous networks. In Sus scrofa (Pig), this protein is Neurofilament heavy polypeptide (NEFH).